A 1249-amino-acid chain; its full sequence is MQERHGLPLRSFSSGKALTAGRAVRPEVAQERRYLQGAPLGLELPGRIALRDPHCAWQWFEPEAAAEAFPAAHWLAAFLVLLGRYGNEEITLGFPEPITVRGRQAPALLRSSYRAMESSAERSARLAEELDDARRQLSADGQERAALAGRCAVQVLAARPTASSPGWLALVLAADGSVGLALRDPQYDELRRIAGHLARLARGLVDAQACVGRLPWLDADEERRLQALRSEPQAAPSRGVLHHLFEAQARRTPQRIAVHAADRSLSYAELERESAALAVRLRAAGVAPEQRVGVCLRRDSGLLVGLLGVLRAGGCYVPLDPAYPEERVAYMLDDADCLLVLVDASTRERVAALGRPCLTLEEGGDQANDLALPASEVGADHLAYIIYTSGSTGRPKGVAIEHGSAHAFLRWAGQHYAAEEWSGVLAATSVCFDLSVYELFGTLAEGGTLHLVENLFSLPDYPRRDEISLLNTVPSVCAALLALGDLPGGVRTLNLAGEPLRGHLVRQIRGQPQVRRLVNLYGPTEDTTYSTVHELDLHAEALDEPPIGRPLPGTTVEVLDGFEAPLPLGVAGELYLGGIGLARGYFGKPEQTAERFRVDPGSGERRYRTGDRVRMREDGVLEHLGRLDDQVKFNGFRIELGEIASCLASFPGVSEACAMLTEDSAGLRRLVGYLAAPFAPPLQALNEHLGQSLPHYMLPSAFVVLAELPKTLNGKIDRKALPRPQATGAEPQALPSDPLEQALHQAWQAQLGAPPRAGQGFYAAGGDSLRAVHLLATLRQRLSRRVPLQAFAGGPATPEALLELLRQAAPEGDEPEPSAGAAGLSLAERRLWVAQQLAPEDTSYNLLAHLRIVGATADAIEQALRQLLERHVALRRRVETGVDGPQPHALAAHAVPLQRLLASDAVHAERLLEDGVRREGARVFDLAHEAPARLLLVVTRDSARADLLLSVHHYAFDDVSLAVFAAELKTLLDGGRLGVLASTPEQVAARERAALASGRLDRVAERWAERLLPLAKAPGAAPARPEESGGRAGQRLALPVSAAVHAACRALAERTSVSPFSAALQAFAEVLGAELGVDDLLVGVALAGRSRLEMQGLVGCFVNLLPLAVGLRPEQSVEWRLRQVGHDLLELLEHQDVPLECVTQALRQRGASGLPIRIACGAHNGRAAPAVDAGVRVEADFIPVPGARLDLTLWLEDQPQGWLAVWTGVSAIFDLHRIERLHQAWERRLLANAGEPISKRMSPEGCNAS.

The adenylation stretch occupies residues 245–633; sequence FEAQARRTPQ…LGRLDDQVKF (389 aa). Positions 716–735 are disordered; it reads IDRKALPRPQATGAEPQALP. Residues 734–809 form the Carrier domain; sequence LPSDPLEQAL…ALLELLRQAA (76 aa). Ser768 is subject to O-(pantetheine 4'-phosphoryl)serine. A condensation region spans residues 823-1150; the sequence is GLSLAERRLW…CVTQALRQRG (328 aa).

The protein belongs to the NRP synthetase family. Pantetheine 4'-phosphate serves as cofactor.

The catalysed reaction is holo-[peptidyl-carrier protein] + L-alanine + ATP = L-alanyl-[peptidyl-carrier protein] + AMP + diphosphate. Involved in the biosynthesis of the antimetabolite L-2-amino-4-methoxy-trans-3-butenoic acid (AMB), a non-proteinogenic amino acid which is toxic for prokaryotes and eukaryotes. Adenylates L-alanine and loads it onto its peptidyl carrier domain via a thioester linkage to the phosphopanthetheine moiety. In addition, loads activated L-Ala in trans onto the second carrier domain of AmbE. Can also activate L-Ser, Gly and D-Ala, albeit to a lower extent. The condensation domain of AmbB probably condenses the activated L-Ala and the L-Glu loaded on AmbE to form a L-Glu-L-Ala dipeptide at the first carrier domain of AmbE. The sequence is that of AMB antimetabolite synthetase AmbB from Pseudomonas aeruginosa (strain ATCC 15692 / DSM 22644 / CIP 104116 / JCM 14847 / LMG 12228 / 1C / PRS 101 / PAO1).